A 242-amino-acid polypeptide reads, in one-letter code: Trypsin-1 (242 aa).

The N-terminal stretch at 1–15 (MISLVFVLLIGAAFA) is a signal peptide. The propeptide at 16–20 (TEDDK) is activation peptide. Residues 21–240 (IVGGYECKAY…FNDWLTSTMA (220 aa)) form the Peptidase S1 domain. 6 disulfides stabilise this stretch: Cys-27/Cys-156, Cys-45/Cys-61, Cys-129/Cys-229, Cys-136/Cys-202, Cys-167/Cys-181, and Cys-192/Cys-216. The active-site Charge relay system is His-60. Positions 72, 74, 77, and 82 each coordinate Ca(2+). The active-site Charge relay system is Asp-104. The active-site Charge relay system is the Ser-196.

Belongs to the peptidase S1 family. It depends on Ca(2+) as a cofactor.

Its subcellular location is the secreted. It is found in the extracellular space. It catalyses the reaction Preferential cleavage: Arg-|-Xaa, Lys-|-Xaa.. This is Trypsin-1 from Salmo salar (Atlantic salmon).